A 551-amino-acid chain; its full sequence is Dihydroxy-acid dehydratase (551 aa).

Residue Asp78 coordinates Mg(2+). Cys119 serves as a coordination point for [2Fe-2S] cluster. Mg(2+)-binding residues include Asp120 and Lys121. Lys121 carries the N6-carboxylysine modification. Cys191 is a [2Fe-2S] cluster binding site. Glu441 serves as a coordination point for Mg(2+). The Proton acceptor role is filled by Ser467.

The protein belongs to the IlvD/Edd family. In terms of assembly, homodimer. [2Fe-2S] cluster is required as a cofactor. Requires Mg(2+) as cofactor.

It carries out the reaction (2R)-2,3-dihydroxy-3-methylbutanoate = 3-methyl-2-oxobutanoate + H2O. The enzyme catalyses (2R,3R)-2,3-dihydroxy-3-methylpentanoate = (S)-3-methyl-2-oxopentanoate + H2O. It participates in amino-acid biosynthesis; L-isoleucine biosynthesis; L-isoleucine from 2-oxobutanoate: step 3/4. The protein operates within amino-acid biosynthesis; L-valine biosynthesis; L-valine from pyruvate: step 3/4. Functionally, functions in the biosynthesis of branched-chain amino acids. Catalyzes the dehydration of (2R,3R)-2,3-dihydroxy-3-methylpentanoate (2,3-dihydroxy-3-methylvalerate) into 2-oxo-3-methylpentanoate (2-oxo-3-methylvalerate) and of (2R)-2,3-dihydroxy-3-methylbutanoate (2,3-dihydroxyisovalerate) into 2-oxo-3-methylbutanoate (2-oxoisovalerate), the penultimate precursor to L-isoleucine and L-valine, respectively. The chain is Dihydroxy-acid dehydratase from Pyrococcus abyssi (strain GE5 / Orsay).